Here is a 353-residue protein sequence, read N- to C-terminus: uncharacterized protein (353 aa).

Disordered stretches follow at residues 1 to 24, 245 to 280, and 305 to 353; these read MSTS…QQSQ, NKSS…EKVP, and AAGK…DLNN. Low complexity predominate over residues 9 to 24; sequence NKKNNTKQQKYQQQSQ. The segment covering 254-280 has biased composition (basic and acidic residues); the sequence is KSGDKSTVKSTDKQVEKKVEESSEKVP. A compositionally biased stretch (low complexity) spans 321 to 332; that stretch reads VTTSTSESTVEV. The span at 342 to 353 shows a compositional bias: acidic residues; that stretch reads EPDEEVFEDLNN.

This is an uncharacterized protein from Acanthamoeba polyphaga mimivirus (APMV).